A 150-amino-acid polypeptide reads, in one-letter code: H/ACA ribonucleoprotein complex subunit 2-like protein (150 aa).

This sequence belongs to the eukaryotic ribosomal protein eL8 family. In terms of assembly, component of the small nucleolar ribonucleoprotein particle containing H/ACA-type snoRNAs (H/ACA snoRNPs). Component of the telomerase holoenzyme complex.

Its subcellular location is the nucleus. It is found in the nucleolus. Its function is as follows. Required for ribosome biogenesis. Part of a complex which catalyzes pseudouridylation of rRNA. This involves the isomerization of uridine such that the ribose is subsequently attached to C5, instead of the normal N1. Pseudouridine ('psi') residues may serve to stabilize the conformation of rRNAs. This Danio rerio (Zebrafish) protein is H/ACA ribonucleoprotein complex subunit 2-like protein (nhp2).